Reading from the N-terminus, the 114-residue chain is UPF0212 protein Mbur_0968 (114 aa).

It belongs to the UPF0212 family.

In Methanococcoides burtonii (strain DSM 6242 / NBRC 107633 / OCM 468 / ACE-M), this protein is UPF0212 protein Mbur_0968.